Consider the following 170-residue polypeptide: Siroheme decarboxylase NirL subunit (170 aa).

The protein belongs to the Ahb/Nir family. As to quaternary structure, probably forms a complex composed of NirD, NirL, NirG and NirH. All proteins are required for the total conversion of siroheme to didecarboxysiroheme.

It carries out the reaction siroheme + 2 H(+) = 12,18-didecarboxysiroheme + 2 CO2. Its pathway is porphyrin-containing compound metabolism. In terms of biological role, involved in heme d1 biosynthesis. Catalyzes the decarboxylation of siroheme into didecarboxysiroheme. In Stutzerimonas stutzeri (Pseudomonas stutzeri), this protein is Siroheme decarboxylase NirL subunit.